We begin with the raw amino-acid sequence, 660 residues long: Probable beta-hexosaminidase fdl (660 aa).

The N-terminal stretch at 1 to 36 is a signal peptide; it reads MSLAVSLRRALLVLLTGAIFILTVLYWNQGVTKAQA. N-linked (GlcNAc...) asparagine glycans are attached at residues asparagine 210, asparagine 412, and asparagine 452.

Belongs to the glycosyl hydrolase 20 family. In third instar larval and early pupal brains, expressed in cells sending projections across the interhemispheric junction. In adult brain, expressed in mushroom body, ellipsoid body and pars intercerebralis.

It catalyses the reaction Hydrolysis of terminal non-reducing N-acetyl-D-hexosamine residues in N-acetyl-beta-D-hexosaminides.. Involved in brain restructurization via hormonal control during metamorphosis. Implicated in N-glycan processing. This chain is Probable beta-hexosaminidase fdl (fdl), found in Drosophila melanogaster (Fruit fly).